A 677-amino-acid polypeptide reads, in one-letter code: Methionine--tRNA ligase (677 aa).

The short motif at P15–H25 is the 'HIGH' region element. The Zn(2+) site is built by C146, C149, C159, and C162. Positions K333–S337 match the 'KMSKS' region motif. ATP is bound at residue K336. Residues D575–K677 form the tRNA-binding domain.

The protein belongs to the class-I aminoacyl-tRNA synthetase family. MetG type 1 subfamily. In terms of assembly, homodimer. Zn(2+) is required as a cofactor.

Its subcellular location is the cytoplasm. The enzyme catalyses tRNA(Met) + L-methionine + ATP = L-methionyl-tRNA(Met) + AMP + diphosphate. Its function is as follows. Is required not only for elongation of protein synthesis but also for the initiation of all mRNA translation through initiator tRNA(fMet) aminoacylation. The polypeptide is Methionine--tRNA ligase (Salmonella arizonae (strain ATCC BAA-731 / CDC346-86 / RSK2980)).